The sequence spans 569 residues: MASQLDLIGGDYIAGISINPPTNSRVTSVYSEVQASRIDHTLPLPSVFKTPFKIIDGPPSSSAGHPEEIEKLFPNLFGQPSALLVPNQSNEVSSDQKLKIGVVLSGGQAPGGHNVICGIFDYLQEYARGSSLFGFRGGPAGIMKGKYIELTSEFVYPYRNQGGFDMICSGRDKIETPEQFKQAEETVTKMDLDGLVVIGGDDSNTNACLLAEHFRAKNMKTLVIGCPKTIDGDLKSKEVPTSFGFDTACKIYSEMIGNVMIDARSTGKYYHFVRLMGRAASHITLECALQTHPNITIIGEEVFEKKLTLKNVTDNIVDVIYKRAENGYNYGVILVPEGLIDFIPEVQQLISELNEVLAEGNVDEEGQWKKNLKKETLEIFEFLPQTIQEQLMLERDPHGNVQVAKIETEKMLIQMVETELEKKKTEGTYEREFMGKSHFFGYEGRCGLPTNFDATYCYALGYGAGSLLQSGKTGLISSVGNLAAPVEEWTVGGTALTSLMDVERRHGKFKPVIKKAMVELEGAPFKKFASQREEWALKNRYISPGPIQFKGPGSDARNHTLMLELGAQA.

Gly107 contacts diphosphate. Mg(2+) is bound at residue Asp201. Residues Thr229–Asp231, Lys268–Tyr269, Met276–Arg278, Glu337, and Tyr442–Arg445 each bind substrate. The Proton acceptor role is filled by Asp231.

This sequence belongs to the phosphofructokinase type A (PFKA) family. PPi-dependent PFK group II subfamily. Clade 'Long' sub-subfamily. As to quaternary structure, tetramer of two alpha (regulatory) and two beta (catalytic) chains. Mg(2+) serves as cofactor.

The protein resides in the cytoplasm. It carries out the reaction beta-D-fructose 6-phosphate + diphosphate = beta-D-fructose 1,6-bisphosphate + phosphate + H(+). Its pathway is carbohydrate degradation; glycolysis; D-glyceraldehyde 3-phosphate and glycerone phosphate from D-glucose: step 3/4. Allosterically activated by fructose 2,6-bisphosphate. Catalytic subunit of pyrophosphate--fructose 6-phosphate 1-phosphotransferase. Catalyzes the phosphorylation of D-fructose 6-phosphate, the first committing step of glycolysis. Uses inorganic phosphate (PPi) as phosphoryl donor instead of ATP like common ATP-dependent phosphofructokinases (ATP-PFKs), which renders the reaction reversible, and can thus function both in glycolysis and gluconeogenesis. This is Pyrophosphate--fructose 6-phosphate 1-phosphotransferase subunit beta 2 from Arabidopsis thaliana (Mouse-ear cress).